A 1684-amino-acid polypeptide reads, in one-letter code: Latrophilin Cirl (1684 aa).

Residues M1 to R765 lie on the Extracellular side of the membrane. The SUEL-type lectin domain occupies A21–V110. N-linked (GlcNAc...) asparagine glycosylation is found at N138, N251, N297, and N336. The tract at residues P181–A300 is disordered. Polar residues-rich tracts occupy residues S250 to I260 and K278 to A300. Positions S370–S391 are disordered. Positions T381–S391 are enriched in low complexity. Residues N396, N653, N701, and N728 are each glycosylated (N-linked (GlcNAc...) asparagine). The GAIN-B domain occupies R559–H752. 2 disulfides stabilise this stretch: C707–C734 and C722–C736. Residues C707–H752 are GPS. The chain crosses the membrane as a helical span at residues I766–L786. Residues K787–T799 are Cytoplasmic-facing. The chain crosses the membrane as a helical span at residues S800 to I820. At E821–S826 the chain is on the extracellular side. Residues I827–F847 form a helical membrane-spanning segment. At C848–V873 the chain is on the cytoplasmic side. The chain crosses the membrane as a helical span at residues N874–I894. At N895–F918 the chain is on the extracellular side. Residues V919–I939 traverse the membrane as a helical segment. Topologically, residues M940 to S966 are cytoplasmic. The helical transmembrane segment at F967–A987 threads the bilayer. Residues K988 to T994 lie on the Extracellular side of the membrane. A helical membrane pass occupies residues G995 to F1015. At H1016–K1684 the chain is on the cytoplasmic side. The disordered stretch occupies residues P1080 to T1100. 3 positions are modified to phosphoserine: S1156, S1247, and S1254. 4 disordered regions span residues K1228–R1255, K1270–P1353, S1441–Q1520, and S1587–L1669. Positions Q1298 to L1314 are enriched in low complexity. Residues S1315 and S1316 each carry the phosphoserine modification. Positions L1328–L1348 are enriched in low complexity. Positions R1455–Q1466 are enriched in polar residues. Composition is skewed to acidic residues over residues D1476–T1489 and C1499–D1512. Over residues Q1631–H1654 the composition is skewed to low complexity.

It belongs to the G-protein coupled receptor 2 family. LN-TM7 subfamily. As to quaternary structure, forms a heterodimer, consisting of a large extracellular region non-covalently linked to a seven-transmembrane moiety. Post-translationally, proteolytically cleaved into 2 subunits, an extracellular subunit and a seven-transmembrane subunit.

The protein resides in the cell membrane. This Drosophila persimilis (Fruit fly) protein is Latrophilin Cirl.